The primary structure comprises 393 residues: Phospholipase A1-II 1 (393 aa).

Residues 200 to 220 are a coiled coil; it reads QVLNEIKRLQDMYEHEETSIT. Ser-225 (acyl-ester intermediate) is an active-site residue. Catalysis depends on charge relay system residues Ser-225, Asp-284, and His-321.

This sequence belongs to the AB hydrolase superfamily. Lipase family.

It localises to the cytoplasm. In terms of biological role, acylhydrolase that catalyzes the hydrolysis of phospholipids at the sn-1 position. This is Phospholipase A1-II 1 from Oryza sativa subsp. indica (Rice).